Here is a 411-residue protein sequence, read N- to C-terminus: Serine hydroxymethyltransferase (411 aa).

Residues Leu117 and 121–123 (GHL) each bind (6S)-5,6,7,8-tetrahydrofolate. Position 226 is an N6-(pyridoxal phosphate)lysine (Lys226). (6S)-5,6,7,8-tetrahydrofolate contacts are provided by residues Glu241 and 349–351 (SPF).

The protein belongs to the SHMT family. As to quaternary structure, homodimer. It depends on pyridoxal 5'-phosphate as a cofactor.

The protein localises to the cytoplasm. It catalyses the reaction (6R)-5,10-methylene-5,6,7,8-tetrahydrofolate + glycine + H2O = (6S)-5,6,7,8-tetrahydrofolate + L-serine. It functions in the pathway one-carbon metabolism; tetrahydrofolate interconversion. It participates in amino-acid biosynthesis; glycine biosynthesis; glycine from L-serine: step 1/1. Catalyzes the reversible interconversion of serine and glycine with tetrahydrofolate (THF) serving as the one-carbon carrier. This reaction serves as the major source of one-carbon groups required for the biosynthesis of purines, thymidylate, methionine, and other important biomolecules. Also exhibits THF-independent aldolase activity toward beta-hydroxyamino acids, producing glycine and aldehydes, via a retro-aldol mechanism. This is Serine hydroxymethyltransferase from Oceanobacillus iheyensis (strain DSM 14371 / CIP 107618 / JCM 11309 / KCTC 3954 / HTE831).